A 296-amino-acid polypeptide reads, in one-letter code: MKNGTIQQSLSGFYDIWSGGKLYRTRARGNFRKRGLKPVVGDQVEFEAENQREGYLLKILPRKNQLVRPMVANVDLAVVVTAVKEPNLSTNLLDRQLVALESQGIDPVIYFSKTDLLSDQEADALMLVVKGYQMIGYPVLYQRPPFGEEALGELRKILTGKVVTMMGQTGAGKSTLLNHLAPDLNLATGEISQALKRGRHTTRKVSLMQVGDALIADTPGFSSYEDFQMTVEELPHFFPEMQALAPECKFRGCLHIKEPSCAVKNALKHGKIMNSRYDNYLQFHELIANQKPNYQK.

One can recognise a CP-type G domain in the interval 63-224 (KNQLVRPMVA…IADTPGFSSY (162 aa)). Residues 112-115 (SKTD) and 167-175 (GQTGAGKST) each bind GTP. Zn(2+) is bound by residues C248, C253, H255, and C261.

The protein belongs to the TRAFAC class YlqF/YawG GTPase family. RsgA subfamily. As to quaternary structure, monomer. Associates with 30S ribosomal subunit, binds 16S rRNA. The cofactor is Zn(2+).

The protein resides in the cytoplasm. One of several proteins that assist in the late maturation steps of the functional core of the 30S ribosomal subunit. Helps release RbfA from mature subunits. May play a role in the assembly of ribosomal proteins into the subunit. Circularly permuted GTPase that catalyzes slow GTP hydrolysis, GTPase activity is stimulated by the 30S ribosomal subunit. The protein is Small ribosomal subunit biogenesis GTPase RsgA of Limosilactobacillus fermentum (strain NBRC 3956 / LMG 18251) (Lactobacillus fermentum).